A 552-amino-acid polypeptide reads, in one-letter code: Chaperonin GroEL (552 aa).

Residues 30–33 (TLGP), K51, 87–91 (DGTTT), G415, 480–482 (NAA), and D496 contribute to the ATP site.

Belongs to the chaperonin (HSP60) family. Forms a cylinder of 14 subunits composed of two heptameric rings stacked back-to-back. Interacts with the co-chaperonin GroES.

Its subcellular location is the cytoplasm. It carries out the reaction ATP + H2O + a folded polypeptide = ADP + phosphate + an unfolded polypeptide.. Together with its co-chaperonin GroES, plays an essential role in assisting protein folding. The GroEL-GroES system forms a nano-cage that allows encapsulation of the non-native substrate proteins and provides a physical environment optimized to promote and accelerate protein folding. This Verminephrobacter eiseniae (strain EF01-2) protein is Chaperonin GroEL.